The primary structure comprises 375 residues: MVDQNRAFGWAANDESGVLSPFHFSRRENGENDVTVKILFCGVCHSDLHTIKNHWGFSRYPIIPGHEIVGIATKVGKNVTKFKEGDRVGVGVIIGSCQSCESCNQDLENYCPKVVFTYNSRSSDGTRNQGGYSDVIVVDHRFVLSIPDGLPSDSGAPLLCAGITVYSPMKYYGMTKESGKRLGVNGLGGLGHIAVKIGKAFGLRVTVISRSSEKEREAIDRLGADSFLVTTDSQKMKEAVGTMDFIIDTVSAEHALLPLFSLLKVSGKLVALGLLEKPLDLPIFPLVLGRKMVGGSQIGGMKETQEMLEFCAKHKIVSDIELIKMSDINSAMDRLVKSDVRYRFVIDVANSLLPESSAEILTEHVDHGVSITSRF.

Cys44 is a Zn(2+) binding site. Residue Ser46 coordinates NADP(+). Zn(2+)-binding residues include His66, Glu67, Cys97, Cys100, Cys103, Cys111, and Cys160. NADP(+) contacts are provided by residues Thr164, 186–191, 209–214, Thr249, Gly273, and 296–298; these read GLGGLG, SRSSEK, and SQI.

This sequence belongs to the zinc-containing alcohol dehydrogenase family. In terms of assembly, homodimer. Zn(2+) is required as a cofactor. In terms of tissue distribution, expressed in the root tips. Expressed in the apical meristematic regions, leaf veins and at the base of the trichomes. Expressed at the base of the stems. Expressed in the abscission zones of newly formed siliques.

The catalysed reaction is (E)-cinnamyl alcohol + NADP(+) = (E)-cinnamaldehyde + NADPH + H(+). It catalyses the reaction (E)-coniferol + NADP(+) = (E)-coniferaldehyde + NADPH + H(+). It carries out the reaction (E)-sinapyl alcohol + NADP(+) = (E)-sinapaldehyde + NADPH + H(+). The enzyme catalyses (E)-4-coumaroyl alcohol + NADP(+) = (E)-4-coumaraldehyde + NADPH + H(+). The catalysed reaction is (E)-caffeyl alcohol + NADP(+) = (E)-caffeyl aldehyde + NADPH + H(+). Its pathway is aromatic compound metabolism; phenylpropanoid biosynthesis. Functionally, involved in lignin biosynthesis. Catalyzes the final step specific for the production of lignin monomers. Catalyzes the NADPH-dependent reduction of coniferaldehyde, 5-hydroxyconiferaldehyde, sinapaldehyde, 4-coumaraldehyde and caffeyl aldehyde to their respective alcohols. This Arabidopsis thaliana (Mouse-ear cress) protein is Cinnamyl alcohol dehydrogenase 3.